We begin with the raw amino-acid sequence, 179 residues long: MSSRILTSHFSGLEEFLQQHAALLAKSTDGTVAVFANNAPAFYALTPARLAQLLELEARLARPGSDIALAPQFFEEPAAAPVAVPMGKFAMYADWQPDADFQRLAALWGIALSQPVTPEELAAFVAYWQAEGKVFHHVQWQQKLARSVQISRASNGGQPKRDVNSVSEPDSHIPRGFRG.

Positions 151-179 (SRASNGGQPKRDVNSVSEPDSHIPRGFRG) are disordered. Residues 159–173 (PKRDVNSVSEPDSHI) are compositionally biased toward basic and acidic residues.

Belongs to the DnaT family. In terms of assembly, homooligomerizes. Interacts with PriB. Component of the replication restart primosome. Primosome assembly occurs via a 'hand-off' mechanism. PriA binds to replication forks, subsequently PriB then DnaT bind; DnaT then displaces ssDNA to generate the helicase loading substrate.

Functionally, involved in the restart of stalled replication forks, which reloads the replicative helicase on sites other than the origin of replication. Can function in multiple replication restart pathways. Displaces ssDNA from a PriB-ssDNA complex. Probably forms a spiral filament on ssDNA. In Klebsiella pneumoniae (strain 342), this protein is Replication restart protein DnaT.